The primary structure comprises 387 residues: Zinc finger protein neuro-d4 (387 aa).

Glycyl lysine isopeptide (Lys-Gly) (interchain with G-Cter in SUMO2) cross-links involve residues K106, K129, and K133. A C2H2-type zinc finger spans residues 195–218 (YVCDICGKRYKNRPGLSYHYTHTH). PHD-type zinc fingers lie at residues 271 to 328 (NGYC…CKSC) and 325 to 375 (CKSC…CLRH). The Zn(2+) site is built by C274, C277, C293, C296, H301, C304, C322, C325, C328, C331, C343, C346, H351, C354, C369, and C372.

This sequence belongs to the requiem/DPF family. As to quaternary structure, component of neuron-specific chromatin remodeling complex (nBAF complex) composed of at least, ARID1A/BAF250A or ARID1B/BAF250B, SMARCD1/BAF60A, SMARCD3/BAF60C, SMARCA2/BRM/BAF190B, SMARCA4/BRG1/BAF190A, SMARCB1/BAF47, SMARCC1/BAF155, SMARCE1/BAF57, SMARCC2/BAF170, DPF1/BAF45B, DPF3/BAF45C, ACTL6B/BAF53B and actin. As to expression, at embryonic stages, predominant expression in the nervous system. Expressed specifically in postmitotic neurons (at protein level).

It localises to the cytoplasm. Its subcellular location is the nucleus. Its function is as follows. May have an important role in developing neurons by participating in regulation of cell survival, possibly as a neurospecific transcription factor. Belongs to the neuron-specific chromatin remodeling complex (nBAF complex). During neural development a switch from a stem/progenitor to a postmitotic chromatin remodeling mechanism occurs as neurons exit the cell cycle and become committed to their adult state. The transition from proliferating neural stem/progenitor cells to postmitotic neurons requires a switch in subunit composition of the npBAF and nBAF complexes. As neural progenitors exit mitosis and differentiate into neurons, npBAF complexes which contain ACTL6A/BAF53A and PHF10/BAF45A, are exchanged for homologous alternative ACTL6B/BAF53B and DPF1/BAF45B or DPF3/BAF45C subunits in neuron-specific complexes (nBAF). The npBAF complex is essential for the self-renewal/proliferative capacity of the multipotent neural stem cells. The nBAF complex along with CREST plays a role regulating the activity of genes essential for dendrite growth. This is Zinc finger protein neuro-d4 from Mus musculus (Mouse).